A 431-amino-acid chain; its full sequence is 3-phosphoshikimate 1-carboxyvinyltransferase (431 aa).

Residues K21, S22, and R26 each contribute to the 3-phosphoshikimate site. K21 serves as a coordination point for phosphoenolpyruvate. G93 and R121 together coordinate phosphoenolpyruvate. 5 residues coordinate 3-phosphoshikimate: S166, Q168, S192, D317, and K344. Position 168 (Q168) interacts with phosphoenolpyruvate. D317 (proton acceptor) is an active-site residue. Residues R348 and R390 each coordinate phosphoenolpyruvate.

It belongs to the EPSP synthase family. Monomer.

It localises to the cytoplasm. The enzyme catalyses 3-phosphoshikimate + phosphoenolpyruvate = 5-O-(1-carboxyvinyl)-3-phosphoshikimate + phosphate. Its pathway is metabolic intermediate biosynthesis; chorismate biosynthesis; chorismate from D-erythrose 4-phosphate and phosphoenolpyruvate: step 6/7. Functionally, catalyzes the transfer of the enolpyruvyl moiety of phosphoenolpyruvate (PEP) to the 5-hydroxyl of shikimate-3-phosphate (S3P) to produce enolpyruvyl shikimate-3-phosphate and inorganic phosphate. The polypeptide is 3-phosphoshikimate 1-carboxyvinyltransferase (Herpetosiphon aurantiacus (strain ATCC 23779 / DSM 785 / 114-95)).